Here is a 1038-residue protein sequence, read N- to C-terminus: Fibronectin-binding protein A (1038 aa).

A signal peptide spans 1 to 36 (MKNNLRYGIRKHKLGAASVFLGTMIVVGMGQDKEAA). The short motif at 7-18 (YGIRKHKLGAAS) is the YSIRK-G/S signaling motif element. Residues 37-193 (ASEQKTTTVE…VSEVKGTDVT (157 aa)) form a disordered region. Positions 37 to 507 (ASEQKTTTVE…SNKADGNGKN (471 aa)) are ligand-binding A region. Residues 39-92 (EQKTTTVEENGNSATDNKTSETQTTATNVNHIEETQSYNATVTEQPSNATQVTT) are compositionally biased toward polar residues. Over residues 112–121 (TVKEEEKPQV) the composition is skewed to basic and acidic residues. Residues 122-164 (KETTQPQDNSGNQRQVDLTPKKVTQNQGTETQVEVAQPRTASE) show a composition bias toward polar residues. Basic and acidic residues predominate over residues 174-189 (DVAEAKEASDVSEVKG). A fibrinogen/elastin/tropoelastin-binding region spans residues 189–507 (GTDVTSKVTV…SNKADGNGKN (319 aa)). The fibronectin-binding stretch occupies residues 508–868 (GQIIQDNDFE…EGQQTIEEDT (361 aa)). The B-1 repeat unit spans residues 541-570 (ENQDNTPLDIDYHTAIDGEGGYVDGYIETI). Positions 541–600 (ENQDNTPLDIDYHTAIDGEGGYVDGYIETIEETDSSAIDIDYHTAVDSEVGHVGGYTESS) are 2 X approximate tandem repeats. The B-2 repeat unit spans residues 571–600 (EETDSSAIDIDYHTAVDSEVGHVGGYTESS). 3 disordered regions span residues 736–804 (LGYE…GGNI), 825–976 (IEED…GKVV), and 989–1015 (VAPT…NKGM). One copy of the D-1 repeat lies at 741 to 778 (GQNSGNQSFEEDTEEDKPKYEQGGNIVDIDFDSVPQIH). Residues 741–898 (GQNSGNQSFE…TPEVPSEPET (158 aa)) form a 4 X approximate tandem repeats region. One copy of the D-2 repeat lies at 779 to 816 (GQNKGDQSFEEDTEKDKPKYEHGGNIIDIDFDSVPQIH). The D-3 repeat unit spans residues 817 to 855 (GFNKHNEIIEEDTNKDKPNYQFGGHNSVDFEEDTLPKVS). Over residues 825–834 (IEEDTNKDKP) the composition is skewed to basic and acidic residues. One copy of the D-4 repeat lies at 856–898 (GQNEGQQTIEEDTTPPTPPTPEVPSEPETPMPPTPEVPSEPET). Positions 870 to 958 (PPTPPTPEVP…PAEPGKPVPP (89 aa)) are enriched in pro residues. 5 WR repeats span residues 899-912 (PTPP…EPET), 913-926 (PTPP…EPET), 927-940 (PTPP…EPET), 941-954 (PTPP…EPGK), and 955-968 (PVPP…KPSK). The tract at residues 899-968 (PTPPTPEVPS…AKEEPKKPSK (70 aa)) is 5 X tandem repeats, Pro-rich (WR). The LPXTG sorting signal motif lies at 1002–1006 (LPETG). A Pentaglycyl murein peptidoglycan amidated threonine modification is found at Thr1005. The propeptide at 1006 to 1038 (GGEESTNKGMLFGGLFSILGLALLRRNKKNNKA) is removed by sortase.

The protein localises to the secreted. It is found in the cell wall. Promotes bacterial attachment to multiple substrates, such as fibronectin (Fn), fibrinogen (Fg), elastin peptides and tropoelastin. This confers to S.aureus the ability to invade endothelial cells. Promotes adherence to and aggregation of activated platelets. This chain is Fibronectin-binding protein A (fnbA), found in Staphylococcus aureus (strain Mu50 / ATCC 700699).